A 648-amino-acid polypeptide reads, in one-letter code: Primary amine oxidase (648 aa).

Residues 1-9 (MTLNAESEA) constitute a propeptide that is removed on maturation. A substrate-binding site is contributed by 299–310 (AFDSGEYNIGNM). Residue D301 is the Proton acceptor of the active site. C320 and C346 are disulfide-bonded. A substrate-binding site is contributed by 382–387 (VANYEY). Y385 serves as the catalytic Schiff-base intermediate with substrate; via topaquinone. Residue Y385 is modified to 2',4',5'-topaquinone. Cu cation contacts are provided by H436 and H438. D445, F446, and D584 together coordinate Mn(2+). Cu cation is bound at residue H595.

It belongs to the copper/topaquinone oxidase family. In terms of assembly, homodimer. It depends on Cu cation as a cofactor. Zn(2+) serves as cofactor. Requires L-topaquinone as cofactor. The cofactor is Mn(2+). Post-translationally, topaquinone (TPQ) is generated by copper-dependent autoxidation of a specific tyrosyl residue.

It catalyses the reaction a primary methyl amine + O2 + H2O = an aldehyde + H2O2 + NH4(+). In terms of biological role, the exact function of MaoXI is not known. This is Primary amine oxidase (maoI) from Arthrobacter sp. (strain P1).